Reading from the N-terminus, the 314-residue chain is MPIRIDKKLPAVEILRTENIFVMDDQRAAHQDIRPLKILILNLMPQKMVTETQLLRHLANTPLQLDIDFLYMESHRSKTTRSEHMETFYKTFPEVKDEYFDGMIITGAPVEHLPFEEVDYWEEFRQMLEWSKTHVYSTLHICWGAQAGLYLRYGVEKYQMDSKLSGIYPQDTLKEGHLLFRGFDDSYVSPHSRHTEISKEEVLNKTNLEILSEGPQVGVSILASRDLREIYSFGHLEYDRDTLAKEYFRDRDAGFDPHIPENYFKDDDVNQVPCLCWSSSAALFFSNWVDHAVYQETPFDWRKIEDDASAYGYL.

C142 (acyl-thioester intermediate) is an active-site residue. The substrate site is built by K163 and S192. The Proton acceptor role is filled by H235. The active site involves E237. Residue R249 coordinates substrate.

Belongs to the MetA family.

It is found in the cytoplasm. It catalyses the reaction L-homoserine + acetyl-CoA = O-acetyl-L-homoserine + CoA. It functions in the pathway amino-acid biosynthesis; L-methionine biosynthesis via de novo pathway; O-acetyl-L-homoserine from L-homoserine: step 1/1. Functionally, transfers an acetyl group from acetyl-CoA to L-homoserine, forming acetyl-L-homoserine. This Streptococcus pneumoniae serotype 4 (strain ATCC BAA-334 / TIGR4) protein is Homoserine O-acetyltransferase.